The sequence spans 368 residues: Agmatine deiminase (368 aa).

Cys-357 acts as the Amidino-cysteine intermediate in catalysis.

Belongs to the agmatine deiminase family. As to quaternary structure, homodimer.

It catalyses the reaction agmatine + H2O = N-carbamoylputrescine + NH4(+). It functions in the pathway amine and polyamine biosynthesis; putrescine biosynthesis via agmatine pathway; N-carbamoylputrescine from agmatine: step 1/1. Mediates the hydrolysis of agmatine into N-carbamoylputrescine in the arginine decarboxylase (ADC) pathway of putrescine biosynthesis, a basic polyamine. This Ectopseudomonas mendocina (strain ymp) (Pseudomonas mendocina) protein is Agmatine deiminase.